The primary structure comprises 736 residues: Fidgetin (736 aa).

Disordered regions lie at residues 118–155, 180–248, 272–295, and 341–438; these read GMTP…CGNH, TYSG…YSPG, IPGY…GSSA, and STRG…AEEQ. Low complexity predominate over residues 128 to 150; the sequence is VTASVGSSTGVASSLSEPSYSSS. Residues 205 to 214 show a composition bias toward pro residues; sequence QPPPPPPPTL. Residues 216–232 are compositionally biased toward low complexity; the sequence is PSYNTSSPNLSSYNYPP. Positions 352 to 368 are enriched in polar residues; sequence DTSSLAFKPTKQSMPTD. Residues Ala467 and 507-512 contribute to the ATP site; that span reads GTGRTL.

Belongs to the AAA ATPase family.

Its subcellular location is the nucleus matrix. The protein resides in the cytoplasm. It localises to the cytoskeleton. It is found in the microtubule organizing center. The protein localises to the centrosome. Functionally, ATP-dependent microtubule severing protein. Severs microtubules along their length and depolymerizes their ends, primarily the minus-end, suppressing microtubule growth from and attachment to centrosomes. Microtubule severing may promote rapid reorganization of cellular microtubule arrays and the release of microtubules from the centrosome following nucleation. Microtubule release from the mitotic spindle poles may allow depolymerization of the microtubule end proximal to the spindle pole, leading to poleward microtubule flux and poleward motion of chromosome. The chain is Fidgetin (fign) from Danio rerio (Zebrafish).